The sequence spans 872 residues: DNA mismatch repair protein MutS (872 aa).

623 to 630 (GPNMAGKS) is an ATP binding site.

This sequence belongs to the DNA mismatch repair MutS family.

This protein is involved in the repair of mismatches in DNA. It is possible that it carries out the mismatch recognition step. This protein has a weak ATPase activity. The polypeptide is DNA mismatch repair protein MutS (Trichlorobacter lovleyi (strain ATCC BAA-1151 / DSM 17278 / SZ) (Geobacter lovleyi)).